The following is a 210-amino-acid chain: Prolactin-2 (210 aa).

Positions 1 to 23 (MARRSQGTKLHLAVLCLVVSCHA) are cleaved as a signal peptide. Intrachain disulfides connect cysteine 69/cysteine 183 and cysteine 200/cysteine 210.

It belongs to the somatotropin/prolactin family.

The protein resides in the secreted. This chain is Prolactin-2 (prl2), found in Oncorhynchus tshawytscha (Chinook salmon).